Reading from the N-terminus, the 571-residue chain is Septation ring formation regulator EzrA (571 aa).

Residues 1 to 3 are Extracellular-facing; it reads MYY. The chain crosses the membrane as a helical span at residues 4–22; the sequence is MLIGFIIVVIAVIGAGYIL. The Cytoplasmic portion of the chain corresponds to 23-571; that stretch reads KRKHYQRINE…ESKVSVDDIE (549 aa). Coiled-coil stretches lie at residues 248–298, 326–374, 400–437, and 478–529; these read LAQM…DTLE, DALA…ASGE, KFAE…ERER, and RIAE…ENHF.

The protein belongs to the EzrA family.

It localises to the cell membrane. In terms of biological role, negative regulator of FtsZ ring formation; modulates the frequency and position of FtsZ ring formation. Inhibits FtsZ ring formation at polar sites. Interacts either with FtsZ or with one of its binding partners to promote depolymerization. This chain is Septation ring formation regulator EzrA, found in Listeria monocytogenes serovar 1/2a (strain ATCC BAA-679 / EGD-e).